The primary structure comprises 544 residues: Thermosome subunit (544 aa).

The protein belongs to the TCP-1 chaperonin family. In terms of assembly, forms an oligomeric complex of eight-membered rings.

In terms of biological role, molecular chaperone; binds unfolded polypeptides in vitro, and has a weak ATPase activity. The polypeptide is Thermosome subunit (ths) (Methanothermococcus thermolithotrophicus (Methanococcus thermolithotrophicus)).